We begin with the raw amino-acid sequence, 237 residues long: Protein GrpE (237 aa).

2 disordered regions span residues E27–T51 and A202–S237. Composition is skewed to low complexity over residues A33–S45 and S204–S213. Over residues T227–S237 the composition is skewed to polar residues.

The protein belongs to the GrpE family. In terms of assembly, homodimer.

The protein localises to the cytoplasm. Its function is as follows. Participates actively in the response to hyperosmotic and heat shock by preventing the aggregation of stress-denatured proteins, in association with DnaK and GrpE. It is the nucleotide exchange factor for DnaK and may function as a thermosensor. Unfolded proteins bind initially to DnaJ; upon interaction with the DnaJ-bound protein, DnaK hydrolyzes its bound ATP, resulting in the formation of a stable complex. GrpE releases ADP from DnaK; ATP binding to DnaK triggers the release of the substrate protein, thus completing the reaction cycle. Several rounds of ATP-dependent interactions between DnaJ, DnaK and GrpE are required for fully efficient folding. The protein is Protein GrpE of Synechococcus sp. (strain JA-3-3Ab) (Cyanobacteria bacterium Yellowstone A-Prime).